The following is a 175-amino-acid chain: Large ribosomal subunit protein uL10 (175 aa).

Belongs to the universal ribosomal protein uL10 family. Part of the ribosomal stalk of the 50S ribosomal subunit. The N-terminus interacts with L11 and the large rRNA to form the base of the stalk. The C-terminus forms an elongated spine to which L12 dimers bind in a sequential fashion forming a multimeric L10(L12)X complex.

In terms of biological role, forms part of the ribosomal stalk, playing a central role in the interaction of the ribosome with GTP-bound translation factors. The polypeptide is Large ribosomal subunit protein uL10 (Prochlorococcus marinus (strain MIT 9215)).